A 132-amino-acid polypeptide reads, in one-letter code: Sec-independent protein translocase protein TatB (132 aa).

A helical membrane pass occupies residues 2-22 (FDGIGFMELLLIGILGLVVLG). The disordered stretch occupies residues 86 to 132 (LKSAAQSVNRPYKVEDISPASSSAPVDPAPTETKTAETSANSEKPNG). Over residues 103–115 (SPASSSAPVDPAP) the composition is skewed to low complexity. Positions 117–132 (ETKTAETSANSEKPNG) are enriched in polar residues.

Belongs to the TatB family. In terms of assembly, the Tat system comprises two distinct complexes: a TatABC complex, containing multiple copies of TatA, TatB and TatC subunits, and a separate TatA complex, containing only TatA subunits. Substrates initially bind to the TatABC complex, which probably triggers association of the separate TatA complex to form the active translocon.

Its subcellular location is the cell inner membrane. In terms of biological role, part of the twin-arginine translocation (Tat) system that transports large folded proteins containing a characteristic twin-arginine motif in their signal peptide across membranes. Together with TatC, TatB is part of a receptor directly interacting with Tat signal peptides. TatB may form an oligomeric binding site that transiently accommodates folded Tat precursor proteins before their translocation. The sequence is that of Sec-independent protein translocase protein TatB from Shewanella sediminis (strain HAW-EB3).